An 87-amino-acid chain; its full sequence is Defensin-A (87 aa).

The N-terminal stretch at 1 to 19 (MKFYLVLAFLTLCAVAVTA) is a signal peptide. A propeptide spanning residues 20 to 44 (LPAGDETRIDLETLEEDLRLVDGAQ) is cleaved from the precursor. Cystine bridges form between cysteine 57–cysteine 78, cysteine 64–cysteine 83, and cysteine 68–cysteine 85.

Hemolymph and fat body.

Its subcellular location is the secreted. In terms of biological role, antibacterial peptide mostly active against Gram-positive and Gram negative bacteria. In Glossina morsitans morsitans (Savannah tsetse fly), this protein is Defensin-A.